Reading from the N-terminus, the 472-residue chain is Cysteine--tRNA ligase (472 aa).

Cysteine 27 is a binding site for Zn(2+). The short motif at 29–39 is the 'HIGH' region element; sequence PTVYNLIHIGN. Zn(2+) contacts are provided by cysteine 214, histidine 239, and glutamate 243. The 'KMSKS' region motif lies at 271 to 275; sequence KMSKS. ATP is bound at residue lysine 274.

This sequence belongs to the class-I aminoacyl-tRNA synthetase family. Monomer. Zn(2+) is required as a cofactor.

It is found in the cytoplasm. The enzyme catalyses tRNA(Cys) + L-cysteine + ATP = L-cysteinyl-tRNA(Cys) + AMP + diphosphate. This is Cysteine--tRNA ligase from Lachnospira eligens (strain ATCC 27750 / DSM 3376 / VPI C15-48 / C15-B4) (Eubacterium eligens).